The following is a 245-amino-acid chain: U21-ctenitoxin-Pn1a (245 aa).

Residues 1-245 (IVYGTVTTPG…FRSWMDKVMT (245 aa)) enclose the Peptidase S1 domain. A disulfide bridge connects residues Cys30 and Cys46. Residues His45 and Asp95 each act as charge relay system in the active site. Disulfide bonds link Cys161/Cys183 and Cys192/Cys221. Ser196 acts as the Charge relay system in catalysis.

In terms of tissue distribution, expressed by the venom gland.

Its subcellular location is the secreted. In terms of biological role, protease. Hydrolyzes gelatin and succinyl casein. This Phoneutria nigriventer (Brazilian armed spider) protein is U21-ctenitoxin-Pn1a.